A 313-amino-acid polypeptide reads, in one-letter code: Mitochondrial uncoupling protein 5 (313 aa).

Solcar repeat units lie at residues 4–108 (KGFA…IKGE), 117–208 (MPLM…VKET), and 217–307 (DGLG…VKKL). 6 consecutive transmembrane segments (helical) span residues 6–26 (FAEG…LDLI), 77–97 (MRAL…YSTT), 123–143 (IGAG…ADVA), 182–202 (RGSS…LASY), 223–243 (VSAS…VDVI), and 280–300 (YKGF…LFVT).

This sequence belongs to the mitochondrial carrier (TC 2.A.29) family. Expressed in roots, leaves, stems and flowers.

It localises to the mitochondrion inner membrane. Functionally, PUMPS are mitochondrial transporter proteins that create proton leaks across the inner mitochondrial membrane, thus uncoupling oxidative phosphorylation. This leads to a decrease in the efficiency of oxidative phosphorylation and an increase in heat production. May be involved in protecting plant cells against oxidative stress damage. Recombinant PUMP5, reconstituted into liposomes, transports a wide range of dicarboxylic acids including malate, oxaloacetate and succinate as well as phosphate, sulfate and thiosulfate. However, it is unknown if these transports are of any biological significance in vivo. This chain is Mitochondrial uncoupling protein 5 (PUMP5), found in Arabidopsis thaliana (Mouse-ear cress).